The sequence spans 121 residues: Small ribosomal subunit protein uS13 (121 aa).

Residues 94–121 (GLPVRGQRTRTNARTRKGKRKTVAGKKK) are disordered.

It belongs to the universal ribosomal protein uS13 family. Part of the 30S ribosomal subunit. Forms a loose heterodimer with protein S19. Forms two bridges to the 50S subunit in the 70S ribosome.

Its function is as follows. Located at the top of the head of the 30S subunit, it contacts several helices of the 16S rRNA. In the 70S ribosome it contacts the 23S rRNA (bridge B1a) and protein L5 of the 50S subunit (bridge B1b), connecting the 2 subunits; these bridges are implicated in subunit movement. Contacts the tRNAs in the A and P-sites. This Treponema pallidum (strain Nichols) protein is Small ribosomal subunit protein uS13.